A 106-amino-acid polypeptide reads, in one-letter code: Toxin-like structure LSTX-D3 (106 aa).

An N-terminal signal peptide occupies residues 1–20; it reads MMKVLVVVALLVTLISYSSS. Residues 21-41 constitute a propeptide that is removed on maturation; the sequence is EGIDDLEADELLSLMANEQTR. Disulfide bonds link C45–C60, C52–C69, C59–C85, and C71–C83.

Belongs to the neurotoxin 19 (CSTX) family. 02 (D7) subfamily. As to expression, expressed by the venom gland.

The protein resides in the secreted. The protein is Toxin-like structure LSTX-D3 of Lycosa singoriensis (Wolf spider).